The primary structure comprises 400 residues: Subtilisin-like protease 2 (400 aa).

The signal sequence occupies residues Met1 to Ala20. A propeptide spanning residues Ala21–Asn119 is cleaved from the precursor. An Inhibitor I9 domain is found at Ser42 to Gln117. N-linked (GlcNAc...) asparagine glycosylation occurs at Asn82. Residues Thr128–Ala400 form the Peptidase S8 domain. Catalysis depends on charge relay system residues Asp160, His192, and Ser345.

The protein belongs to the peptidase S8 family.

It is found in the secreted. Potently inhibited by the serine peptidase inhibitor chymostatin. Also inhibited by antpain and PMSF. Functionally, major secreted subtilisin-like serine endopeptidase. Preferentially cleaves substrates containing hydrophobic residues at P4, positively charged residues at P3, small or flexible residues at P2, and large, bulky residues at P1. Mediates the degradation of collagen, the major structural protein in the mammalian host. Degrades the nonhelical regions of collagen that function in the cross-linking of the helical components. May function as virulence factor involved in epidermal wing necrosis observed in white nose syndrome (WNS) in bats. This Pseudogymnoascus destructans (strain ATCC MYA-4855 / 20631-21) (Bat white-nose syndrome fungus) protein is Subtilisin-like protease 2.